Reading from the N-terminus, the 106-residue chain is MTGVDDISSNVHKLVGVTAGMNTAASTGPMNLVLDKCSVVLEELRTIQILTETHSEGLSEQLKMTEKNILEMENLFDQIDQLCLFVQKAKSDLDKLEKLYNVVDRQ.

The stretch at 53-106 (THSEGLSEQLKMTEKNILEMENLFDQIDQLCLFVQKAKSDLDKLEKLYNVVDRQ) forms a coiled coil.

Belongs to the BLOC1S4 family. In terms of assembly, component of the biogenesis of lysosome-related organelles complex-1 (BLOC-1) composed at least of blos-1, blos-2, blos-4, dsbn-1, glo-2, mutd-1 and snpn-1. Interacts with glo-2.

Functionally, component of the biogenesis of lysosome-related organelles complex-1 (BLOC-1) involved in gut granule biogenesis. In Caenorhabditis elegans, this protein is Biogenesis of lysosome-related organelles complex 1 subunit 4 (blos-4).